A 729-amino-acid polypeptide reads, in one-letter code: Fatty acid oxidation complex subunit alpha (729 aa).

Residues 1–189 form an enoyl-CoA hydratase/isomerase region; it reads MLYKGDTLYL…KIGLVDGVVK (189 aa). Substrate is bound at residue Asp-296. The tract at residues 311–729 is 3-hydroxyacyl-CoA dehydrogenase; it reads ETPKQAAVLG…ARPVGDLKTA (419 aa). Residues Met-324, Asp-343, 400–402, Lys-407, and Ser-429 contribute to the NAD(+) site; that span reads VVE. His-450 functions as the For 3-hydroxyacyl-CoA dehydrogenase activity in the catalytic mechanism. Asn-453 lines the NAD(+) pocket. 2 residues coordinate substrate: Asn-500 and Tyr-660. The disordered stretch occupies residues 708–729; that stretch reads RHNEPYYPPVEPARPVGDLKTA.

This sequence in the N-terminal section; belongs to the enoyl-CoA hydratase/isomerase family. In the C-terminal section; belongs to the 3-hydroxyacyl-CoA dehydrogenase family. As to quaternary structure, heterotetramer of two alpha chains (FadB) and two beta chains (FadA).

The catalysed reaction is a (3S)-3-hydroxyacyl-CoA + NAD(+) = a 3-oxoacyl-CoA + NADH + H(+). The enzyme catalyses a (3S)-3-hydroxyacyl-CoA = a (2E)-enoyl-CoA + H2O. It carries out the reaction a 4-saturated-(3S)-3-hydroxyacyl-CoA = a (3E)-enoyl-CoA + H2O. It catalyses the reaction (3S)-3-hydroxybutanoyl-CoA = (3R)-3-hydroxybutanoyl-CoA. The catalysed reaction is a (3Z)-enoyl-CoA = a 4-saturated (2E)-enoyl-CoA. The enzyme catalyses a (3E)-enoyl-CoA = a 4-saturated (2E)-enoyl-CoA. Its pathway is lipid metabolism; fatty acid beta-oxidation. Involved in the aerobic and anaerobic degradation of long-chain fatty acids via beta-oxidation cycle. Catalyzes the formation of 3-oxoacyl-CoA from enoyl-CoA via L-3-hydroxyacyl-CoA. It can also use D-3-hydroxyacyl-CoA and cis-3-enoyl-CoA as substrate. The protein is Fatty acid oxidation complex subunit alpha of Shigella flexneri serotype 5b (strain 8401).